A 558-amino-acid chain; its full sequence is Factor VII-activating protease (558 aa).

The first 23 residues, 1-23 (MSVVMLVFRVLLLIALVGNSAIG), serve as a signal peptide directing secretion. 3 EGF-like domains span residues 71 to 107 (DDDP…SRCQ), 109 to 146 (VQNK…PDCS), and 148 to 186 (VLPV…RFCE). Cystine bridges form between C75–C86, C80–C95, C97–C106, C113–C123, C118–C134, C136–C145, C152–C163, C157–C174, C176–C185, C192–C274, C213–C255, C244–C269, C299–C433, C345–C361, C353–C422, C445–C513, C475–C491, and C503–C531. The Kringle domain occupies 191–274 (DCYVGDGYSY…KWEYCNVEVC (84 aa)). A Peptidase S1 domain is found at 312–553 (IYGGFKSTAG…FLNWIKTTMH (242 aa)). Catalysis depends on charge relay system residues H360 and D409. The Charge relay system role is filled by S507.

It belongs to the peptidase S1 family. Heterodimer; disulfide-linked. Heterodimer of a 50 kDa heavy and a 27 kDa light chain linked by a disulfide bond. Proteolytic cleavage at Gly-23 or Met-27 can give rise to the 50 kDa heavy chain (HC) and cleavage at Arg-311 or Lys-317 can give rise to the 27 kDa light chain (LC). The HC can undergo further proteolytic cleavage giving rise to a 26 kDa fragment. The LC can undergo further proteolytic cleavage at Arg-311 leading to a 17-kDa fragment and at Arg-478 leading to a 8-kDa fragment.

Its subcellular location is the secreted. Its function is as follows. Cleaves the alpha-chain at multiple sites and the beta-chain between 'Lys-53' and 'Lys-54' but not the gamma-chain of fibrinogen and therefore does not initiate the formation of the fibrin clot and does not cause the fibrinolysis directly. It does not cleave (activate) prothrombin and plasminogen but converts the inactive single chain urinary plasminogen activator (pro-urokinase) to the active two chain form. Activates coagulation factor VII. May function as a tumor suppressor negatively regulating cell proliferation and cell migration. The polypeptide is Factor VII-activating protease (Rattus norvegicus (Rat)).